We begin with the raw amino-acid sequence, 552 residues long: Phosphoglucomutase (552 aa).

Ser143 serves as the catalytic Phosphoserine intermediate. Positions 143, 295, 297, and 299 each coordinate Mg(2+).

The protein belongs to the phosphohexose mutase family. It depends on Mg(2+) as a cofactor.

It carries out the reaction alpha-D-glucose 1-phosphate = alpha-D-glucose 6-phosphate. It participates in glycolipid metabolism; diglucosyl-diacylglycerol biosynthesis. Catalyzes the interconversion between glucose-6-phosphate and alpha-glucose-1-phosphate. This is the first step in the biosynthesis of diglucosyl-diacylglycerol (Glc2-DAG), i.e. the predominant glycolipid found in the S.aureus membrane, which is also used as a membrane anchor for lipoteichoic acid (LTA). This chain is Phosphoglucomutase (pgcA), found in Staphylococcus aureus (strain bovine RF122 / ET3-1).